The following is a 1359-amino-acid chain: Regulatory-associated protein of TOR 2 (1359 aa).

Disordered stretches follow at residues 17–64 (SSAA…PQVA) and 782–819 (SDNS…QHSD). The segment covering 32 to 50 (HLVDDHLPVENGPDPRRDV) has biased composition (basic and acidic residues). Over residues 782-805 (SDNSATARDGRISTSSPIATNSIM) the composition is skewed to polar residues. Residues 806 to 819 (HGSPQSDDSSQHSD) show a composition bias toward low complexity. WD repeat units lie at residues 1041-1080 (RFEL…PVNT), 1087-1127 (SDRG…GGQK), 1139-1178 (RSAG…VNTI), 1181-1221 (TADS…RLVY), 1228-1269 (PRSE…EPYL), 1273-1312 (AHRG…LTII), and 1321-1359 (QRIG…YQVR).

It belongs to the WD repeat RAPTOR family. In terms of assembly, the target of rapamycin complex 1 (TORC1) is composed of at least RAPTOR, LST8 and TOR.

Component of TORC1 complex, which is an essential cell growth regulator that controls plant development. Acts by recruiting substrates for TOR. Acts by activating transcription, protein synthesis and ribosome biogenesis, and inhibiting mRNA degradation and autophagy. The sequence is that of Regulatory-associated protein of TOR 2 (RAPTOR2) from Oryza sativa subsp. japonica (Rice).